The chain runs to 320 residues: MIACRMSSQDLSITAKLINGGIAGLVGVTCVFPIDLAKTRLQNQQGKDVYKGMTDCLVKTARAEGFLGMYRGAAVNLTLVTPEKAIKLAANDFLRQLLMQDGTQRNLKMEMLAGCGAGICQVVITCPMEMLKIQLQDAGRLAVCQQASASATPTSRPYSTGSTSTHRRPSATLIAWELLRTQGLSGLYRGLGATLLRDIPFSIIYFPLFANLNQLGVSELTGKASFTHSFVAGCAAGSVSAVAVTPLDVLKTRIQTLKKGLGEDTYRGVTDCARKLWTQEGAAAFMKGAGCRALVIAPLFGIAQGVYFIGIGERILKCFE.

3 Solcar repeats span residues 11-97, 105-215, and 224-313; these read LSIT…LRQL, RNLK…LNQL, and ASFT…GIGE. The next 3 helical transmembrane spans lie at 17 to 37, 66 to 86, and 111 to 131; these read LING…IDLA, FLGM…EKAI, and MLAG…MEML. Serine 150 is modified (phosphoserine). 3 helical membrane passes run 190–210, 230–250, and 293–313; these read GLGA…PLFA, FVAG…LDVL, and ALVI…GIGE.

The protein belongs to the mitochondrial carrier (TC 2.A.29) family.

It is found in the mitochondrion inner membrane. The enzyme catalyses L-glutamate(in) + H(+)(in) = L-glutamate(out) + H(+)(out). Its function is as follows. Responsible for the transport of glutamate from the cytosol into the mitochondrial matrix with the concomitant import of a proton (symport system). The sequence is that of Mitochondrial glutamate carrier 2 (Slc25a18) from Rattus norvegicus (Rat).